Reading from the N-terminus, the 130-residue chain is Small ribosomal subunit protein uS11c (130 aa).

It belongs to the universal ribosomal protein uS11 family. Part of the 30S ribosomal subunit.

Its subcellular location is the plastid. It is found in the chloroplast. The chain is Small ribosomal subunit protein uS11c from Cycas taitungensis (Prince sago).